Consider the following 1734-residue polypeptide: Gag-Pol polyprotein (1734 aa).

Glycine 2 is lipidated: N-myristoyl glycine; by host. A PTAP/PSAP motif motif is present at residues proline 109–proline 112. Positions proline 112–arginine 217 are disordered. The short motif at leucine 128–leucine 132 is the LYPX(n)L motif element. A PPXY motif motif is present at residues proline 161–tyrosine 164. Serine 191 carries the phosphoserine; by host modification. The tract at residues glycine 344 to valine 392 is interaction with host PIAS4. The interaction with host UBE2I stretch occupies residues isoleucine 429 to glutamate 434. Composition is skewed to basic and acidic residues over residues arginine 433–serine 474 and arginine 485–leucine 498. Disordered stretches follow at residues arginine 433–leucine 498 and tryptophan 512–isoleucine 551. A coiled-coil region spans residues glutamate 437–leucine 477. The segment at aspartate 501–lysine 518 adopts a CCHC-type zinc-finger fold. Positions valine 560–leucine 630 constitute a Peptidase A2 domain. Catalysis depends on aspartate 565, which acts as the Protease; shared with dimeric partner. The Reverse transcriptase domain occupies leucine 740–leucine 931. Mg(2+) contacts are provided by aspartate 808, aspartate 882, aspartate 883, aspartate 1182, glutamate 1220, aspartate 1241, and aspartate 1311. Residues proline 1173–isoleucine 1319 enclose the RNase H type-1 domain. The HHCC-type zinc finger occupies histidine 1386–cysteine 1426. An Integrase catalytic domain is found at arginine 1443–proline 1601. 2 residues coordinate Mg(2+): aspartate 1454 and aspartate 1513.

This sequence belongs to the retroviral Pol polyprotein family. Homohexamer; further associates as homomultimer. The virus core is composed of a lattice formed from hexagonal rings, each containing six capsid monomers. Interacts with mouse UBE2I and mouse PIAS4. As to quaternary structure, interacts (via PPXY motif) with host NEDD4. Interacts (via PSAP motif) with host TSG101. Interacts (via LYPX(n)L motif) with host PDCD6IP. In terms of assembly, the reverse transcriptase is a monomer (Potential). Interacts (via RNase domains) with host release factor ETF1; this interaction is essential for translational readthrough of amber codon between viral gag and pol genes, as well as for viral replication. Homodimer. The cofactor is Mg(2+). Post-translationally, ubiquitinated by ITCH. Gag can recruit the ubiquitin ligase Itch in an L domain-independent manner to facilitate virus release via a mechanism that involves Gag ubiquitination. Specific enzymatic cleavages by the viral protease yield mature proteins. The protease is released by autocatalytic cleavage. The polyprotein is cleaved during and after budding, this process is termed maturation. In terms of processing, sumoylated; which is required for virus replication. Post-translationally, phosphorylated on serine residues.

The protein localises to the virion. Its subcellular location is the host cell membrane. It localises to the host late endosome membrane. It is found in the host endosome. The protein resides in the host multivesicular body. The protein localises to the host cytoplasm. The enzyme catalyses DNA(n) + a 2'-deoxyribonucleoside 5'-triphosphate = DNA(n+1) + diphosphate. It carries out the reaction Endonucleolytic cleavage to 5'-phosphomonoester.. Its activity is regulated as follows. Most efficiently inhibited by Amprenavir, which is able to block Gag-Pol processing in infected cells. In terms of biological role, plays a role in budding and is processed by the viral protease during virion maturation outside the cell. During budding, it recruits, in a PPXY-dependent or independent manner, Nedd4-like ubiquitin ligases that conjugate ubiquitin molecules to Gag-Pol, or to Gag-Pol binding host factors. Interaction with HECT ubiquitin ligases probably links the viral protein to the host ESCRT pathway and facilitates release. Its function is as follows. Targets Gag and gag-pol polyproteins to the plasma membrane via a multipartite membrane binding signal, that includes its myristoylated N-terminus. Also mediates nuclear localization of the pre-integration complex. Functionally, constituent of the pre-integration complex (PIC) which tethers the latter to mitotic chromosomes. This allows the integration of the viral genome into the host DNA. Forms the spherical core of the virion that encapsulates the genomic RNA-nucleocapsid complex. In terms of biological role, involved in the packaging and encapsidation of two copies of the genome. Binds with high affinity to conserved UCUG elements within the packaging signal, located near the 5'-end of the genome. This binding is dependent on genome dimerization. Acts as a nucleic acid chaperone which is involved in rearrangement of nucleic acid secondary structures during gRNA retrotranscription. Its function is as follows. The aspartyl protease mediates proteolytic cleavages of Gag and Gag-Pol polyproteins during or shortly after the release of the virion from the plasma membrane. Cleavages take place as an ordered, step-wise cascade to yield mature proteins. This process is called maturation. Displays maximal activity during the budding process just prior to particle release from the cell (Potential). Cleaves the translation initiation factor eIF4G leading to the inhibition of host cap-dependent translation. Functionally, RT is a multifunctional enzyme that converts the viral dimeric RNA genome into dsDNA in the cytoplasm, shortly after virus entry into the cell. This enzyme displays a DNA polymerase activity that can copy either DNA or RNA templates, and a ribonuclease H (RNase H) activity that cleaves the RNA strand of RNA-DNA heteroduplexes in a partially processive 3' to 5' endonucleasic mode. Conversion of viral genomic RNA into dsDNA requires many steps. A tRNA binds to the primer-binding site (PBS) situated at the 5' end of the viral RNA. RT uses the 3' end of the tRNA primer to perform a short round of RNA-dependent minus-strand DNA synthesis. The reading proceeds through the U5 region and ends after the repeated (R) region which is present at both ends of viral RNA. The portion of the RNA-DNA heteroduplex is digested by the RNase H, resulting in a ssDNA product attached to the tRNA primer. This ssDNA/tRNA hybridizes with the identical R region situated at the 3' end of viral RNA. This template exchange, known as minus-strand DNA strong stop transfer, can be either intra- or intermolecular. RT uses the 3' end of this newly synthesized short ssDNA to perform the RNA-dependent minus-strand DNA synthesis of the whole template. RNase H digests the RNA template except for a polypurine tract (PPT) situated at the 5' end of the genome. It is not clear if both polymerase and RNase H activities are simultaneous. RNase H probably can proceed both in a polymerase-dependent (RNA cut into small fragments by the same RT performing DNA synthesis) and a polymerase-independent mode (cleavage of remaining RNA fragments by free RTs). Secondly, RT performs DNA-directed plus-strand DNA synthesis using the PPT that has not been removed by RNase H as primers. PPT and tRNA primers are then removed by RNase H. The 3' and 5' ssDNA PBS regions hybridize to form a circular dsDNA intermediate. Strand displacement synthesis by RT to the PBS and PPT ends produces a blunt ended, linear dsDNA copy of the viral genome that includes long terminal repeats (LTRs) at both ends. Catalyzes viral DNA integration into the host chromosome, by performing a series of DNA cutting and joining reactions. This enzyme activity takes place after virion entry into a cell and reverse transcription of the RNA genome in dsDNA. The first step in the integration process is 3' processing. This step requires a complex comprising the viral genome, matrix protein and integrase. This complex is called the pre-integration complex (PIC). The integrase protein removes 2 nucleotides from each 3' end of the viral DNA, leaving recessed CA OH's at the 3' ends. In the second step that requires cell division, the PIC enters cell nucleus. In the third step, termed strand transfer, the integrase protein joins the previously processed 3' ends to the 5' ends of strands of target cellular DNA at the site of integration. The last step is viral DNA integration into host chromosome. The sequence is that of Gag-Pol polyprotein (pol) from Mus musculus (Mouse).